Consider the following 492-residue polypeptide: MKRSALILSFLPLVFGCDNPKSPGHSCASVYSVSSAAASSFCATFTASTVTATTGVPEALLSNCDYKTKHLSSACSCLGTAAVPTVATPSSVSSVYITSATATPTSFTFKTSTAHIVKVAKAATSSTAVVTTPVSVPTASSSFTGNGGTTCTVTEYAAISSAVASCSNILLSDIYAPPSSTIDLQGLQTGAAVIFAGKTTFGDTADSDFDPIVVSGTSVTITGVEGHVIDGNGAAYWDGQGSNGGSDKPDHFFVVKDMYNSRIENLYIQNWPVHCFEIESTEHLTVSGLTLNNSAGDAANSKSDGDPAAHNSDGFDIKESSYFTLENTWVHNQDDCVAVTSGTDIVVDGMYCYGGHGLSIGSIGGKSDNTVNGVTFSNSQVISSQNGCRIKTNSGETGEVYNIRYENITLSDISDYGIDVQQDYLNGGPTGEPTNGVTIANVTFVDVTGTMSDGKDYYILCGDDSCSNFVFDGVSITGGSGDSCNYPSTGCP.

An N-terminal signal peptide occupies residues 1–16 (MKRSALILSFLPLVFG). Cysteines 151 and 166 form a disulfide. PbH1 repeat units follow at residues 216–238 (GTSVTITGVEGHVIDGNGAAYWD), 258–280 (MYNSRIENLYIQNWPVHCFEIES), 281–319 (TEHLTVSGLTLNNSAGDAANSKSDGDPAAHNSDGFDIKE), and 320–341 (SSYFTLENTWVHNQDDCVAVTS). Asparagine 292 is a glycosylation site (N-linked (GlcNAc...) asparagine). The active-site Proton donor is aspartate 334. Residues cysteine 336 and cysteine 352 are joined by a disulfide bond. Histidine 356 is a catalytic residue. PbH1 repeat units lie at residues 371 to 392 (VNGVTFSNSQVISSQNGCRIKT), 400 to 422 (VYNIRYENITLSDISDYGIDVQQ), and 434 to 478 (TNGV…SITG). 2 N-linked (GlcNAc...) asparagine glycosylation sites follow: asparagine 407 and asparagine 441. Cystine bridges form between cysteine 461–cysteine 466 and cysteine 484–cysteine 491.

It belongs to the glycosyl hydrolase 28 family.

Its subcellular location is the secreted. The catalysed reaction is (1,4-alpha-D-galacturonosyl)n+m + H2O = (1,4-alpha-D-galacturonosyl)n + (1,4-alpha-D-galacturonosyl)m.. Involved in maceration and soft-rotting of plant tissue. Hydrolyzes the 1,4-alpha glycosidic bonds of de-esterified pectate in the smooth region of the plant cell wall. This is Probable endopolygalacturonase D (pgaD) from Aspergillus oryzae (strain ATCC 42149 / RIB 40) (Yellow koji mold).